A 361-amino-acid polypeptide reads, in one-letter code: sn-glycerol-3-phosphate import ATP-binding protein UgpC (361 aa).

The ABC transporter domain maps to 4 to 235 (LSFRNLKKTY…PASTFVAGFI (232 aa)). 37-44 (GPSGCGKS) is a binding site for ATP.

The protein belongs to the ABC transporter superfamily. sn-glycerol-3-phosphate importer (TC 3.A.1.1.3) family. As to quaternary structure, the complex is composed of two ATP-binding proteins (UgpC), two transmembrane proteins (UgpA and UgpE) and a solute-binding protein (UgpB).

It is found in the cell inner membrane. It catalyses the reaction sn-glycerol 3-phosphate(out) + ATP + H2O = sn-glycerol 3-phosphate(in) + ADP + phosphate + H(+). Its function is as follows. Part of the ABC transporter complex UgpBAEC involved in sn-glycerol-3-phosphate (G3P) import. Responsible for energy coupling to the transport system. The protein is sn-glycerol-3-phosphate import ATP-binding protein UgpC of Bordetella avium (strain 197N).